The sequence spans 279 residues: Release factor glutamine methyltransferase (279 aa).

S-adenosyl-L-methionine-binding positions include 118–122 (GTGSG), aspartate 141, and asparagine 182. Position 182–185 (182–185 (NPPY)) interacts with substrate.

Belongs to the protein N5-glutamine methyltransferase family. PrmC subfamily.

It carries out the reaction L-glutaminyl-[peptide chain release factor] + S-adenosyl-L-methionine = N(5)-methyl-L-glutaminyl-[peptide chain release factor] + S-adenosyl-L-homocysteine + H(+). Its function is as follows. Methylates the class 1 translation termination release factors RF1/PrfA and RF2/PrfB on the glutamine residue of the universally conserved GGQ motif. The protein is Release factor glutamine methyltransferase of Streptococcus pneumoniae (strain ATCC BAA-255 / R6).